A 619-amino-acid polypeptide reads, in one-letter code: E3 ubiquitin-protein ligase complex SLX5-SLX8 subunit SLX5 (619 aa).

The disordered stretch occupies residues 1–23; the sequence is MHSDTNGRTKSNNSPSDNNPNET. Residues 11–21 are compositionally biased toward low complexity; sequence SNNSPSDNNPN. A phosphoserine mark is found at Ser-14 and Ser-29. Residues 63 to 90 form a disordered region; that stretch reads VRSDSRSRNSQRTHITASSERPDFQANN. A compositionally biased stretch (polar residues) spans 70–90; it reads RNSQRTHITASSERPDFQANN. The interval 201–335 is EUC1 interaction domain; that stretch reads SRRQLLRRSA…ALFTEFRNQL (135 aa).

As to quaternary structure, component of the heterodimeric SUMO-targeted ubiquitin ligase (STUbL) complex composed of SLX5 and SLX8. Interacts with sirtuin SIR2. Interacts with KAR9. Interacts with EUC1.

The protein resides in the nucleus. It is found in the chromosome. It localises to the centromere. Its subcellular location is the kinetochore. It carries out the reaction S-ubiquitinyl-[E2 ubiquitin-conjugating enzyme]-L-cysteine + [acceptor protein]-L-lysine = [E2 ubiquitin-conjugating enzyme]-L-cysteine + N(6)-ubiquitinyl-[acceptor protein]-L-lysine.. The protein operates within protein modification; protein ubiquitination. Functionally, component of the SUMO-targeted ubiquitin ligase (STUbL) complex SLX5/SLX8 that mediates ubiquitination and subsequent desumoylation of sumoylated proteins and proteins containing SUMO-like domains for their degradation. The STUbL complex SLX5/SLX8 stimulates ubiquitin conjugating enzymes, including UBC1, UBC4, UBC5 and UBC13-MMS2, and mediates the proteolytic down-regulation of sumoylated proteins. The STUbL complex SLX5/SLX8 is involved in ubiquitin-mediated degradation of histone variant CSE4, preventing mislocalization to euchromatin. The complex plays an essential role in maintenance of chromosome stability and links SUMO-dependent ubiquitination to a centromere-specific function during mitosis. The complex is involved in proteolysis of spindle positioning protein KAR9 and ensures correct spindle function by regulating levels of microtubule-associated proteins. During replication, the complex helps prevent DNA lesions via recombination and has a role in localizing the DNA damage protein DCD2. The complex especially ubiquitinates the nuclease YEN1 and prevents persistent accumulation of a fraction of YEN1 associated with sites of activity in late G2/M and helps maintain the balance between pro- and anti-crossover pathways during homologous recombination. It is also involved in ubiquitin-mediated degradation of DNA repair proteins RAD52 and RAD57. Along with SIR2, promotes silencing of genes at telomeric or ribosomal DNA (rDNA) loci. Finally, the complex is recruited to distinct genomic hotspots of non-H2B protein ubiquitination (ub-hotspots) by the sumoylated transcription factor-like protein EUC1 where it ubiquitinates EUC1 and presumably other targets. The polypeptide is E3 ubiquitin-protein ligase complex SLX5-SLX8 subunit SLX5 (SLX5) (Saccharomyces cerevisiae (strain ATCC 204508 / S288c) (Baker's yeast)).